A 278-amino-acid chain; its full sequence is Type II restriction enzyme AgeI (278 aa).

The protein belongs to the BsaWI type II restriction endonuclease family.

The catalysed reaction is Endonucleolytic cleavage of DNA to give specific double-stranded fragments with terminal 5'-phosphates.. In terms of biological role, a P subtype restriction enzyme that recognizes the double-stranded sequence 5'-ACCGGT-3' and cleaves after A-1. This is Type II restriction enzyme AgeI (ageIR) from Thalassovita gelatinovora (Thalassobius gelatinovorus).